The sequence spans 197 residues: Holliday junction branch migration complex subunit RuvA (197 aa).

The tract at residues 1 to 64 is domain I; that stretch reads MIDSIVGIIQ…LSELECYGFL (64 aa). Residues 65–143 are domain II; sequence TREERELFLK…KEFKVASTSG (79 aa). Positions 144–152 are flexible linker; sequence KEEKTYEKL. The segment at 152–197 is domain III; the sequence is LEEISLALLSLGYDIDEVNQVLSSEDFSELSLEDGIKLALKKLSKI.

The protein belongs to the RuvA family. Homotetramer. Forms an RuvA(8)-RuvB(12)-Holliday junction (HJ) complex. HJ DNA is sandwiched between 2 RuvA tetramers; dsDNA enters through RuvA and exits via RuvB. An RuvB hexamer assembles on each DNA strand where it exits the tetramer. Each RuvB hexamer is contacted by two RuvA subunits (via domain III) on 2 adjacent RuvB subunits; this complex drives branch migration. In the full resolvosome a probable DNA-RuvA(4)-RuvB(12)-RuvC(2) complex forms which resolves the HJ.

It is found in the cytoplasm. In terms of biological role, the RuvA-RuvB-RuvC complex processes Holliday junction (HJ) DNA during genetic recombination and DNA repair, while the RuvA-RuvB complex plays an important role in the rescue of blocked DNA replication forks via replication fork reversal (RFR). RuvA specifically binds to HJ cruciform DNA, conferring on it an open structure. The RuvB hexamer acts as an ATP-dependent pump, pulling dsDNA into and through the RuvAB complex. HJ branch migration allows RuvC to scan DNA until it finds its consensus sequence, where it cleaves and resolves the cruciform DNA. The sequence is that of Holliday junction branch migration complex subunit RuvA from Caldicellulosiruptor bescii (strain ATCC BAA-1888 / DSM 6725 / KCTC 15123 / Z-1320) (Anaerocellum thermophilum).